A 624-amino-acid polypeptide reads, in one-letter code: MRGVVKLFFLSCSLVSLVSSEETGKSPTANYDHYMPKATATIDPSVFALSNDFEITDVPTTREYTFDITKALASPDGYEREVYVVNNMFPGPVIEANTGDTIIVHVNNHLEEGQSIHWHGLRQLGTAFMDGVPGITQCPIPPGSSFTYQFTVSHQSGTFWWHSHYSNSMADGIWGPLIIHSPNEPLQRGRDYDEDRIVFITDWVHDNSEVVIAALATPEGYKGSPAPPQGDAILINGRGQTNCTATGSSSCTYPPPPEIHVPVNCRVRLRFISATAHPMYRITIDNHPLEVVETDGTAVYGPTVHEISIAPGERYSAIINTSEGKEGDAFWLRTSVALGCMFGGIDQVGLAVVRYTGNGMVSTEEPQTTAWSDLAGATTPCAGLDQTYTLSPRESFSAPREFSQSHVFNSQRGAFVNVYGNTFQGYGFNNISYQNQIFNPLLSIVQRGGSCESTLVASTTFPDLGSGNIIINNLDGVIDHPYHLHGNEFQVIGRGTGALSLDNLTNIDFNLDNPVRKDTLWIQGGSWVVLRITTDNPGVWALHCHIGWHLTEGKLAVVVIQPGAIGHMEGPESWTNLCANTDPNAFGPARRSPSPSIQSSKTSTFQYLREVKGKVVKRRGAREA.

An N-terminal signal peptide occupies residues Met1 to Ser20. 2 consecutive Plastocyanin-like domains span residues Thr69–Asn183 and Asp195–Tyr355. Cu cation contacts are provided by His117, His119, His162, and His164. The cysteines at positions 138 and 578 are disulfide-linked. N-linked (GlcNAc...) asparagine glycosylation is found at Asn242, Asn320, and Asn430. Positions Ile469–Pro562 constitute a Plastocyanin-like 3 domain. 3 residues coordinate Cu cation: His480, His483, and His485. Asn503 carries an N-linked (GlcNAc...) asparagine glycan. His543, Cys544, His545, and His549 together coordinate Cu cation. A disordered region spans residues Asp582–Ser603. A compositionally biased stretch (low complexity) spans Ser592–Ser603.

It belongs to the multicopper oxidase family. Cu cation is required as a cofactor.

Its subcellular location is the secreted. It localises to the cell wall. It carries out the reaction 4 hydroquinone + O2 = 4 benzosemiquinone + 2 H2O. Functionally, laccase that catalyzes the oxidation of certain aromatic compounds, including L-dopa, to quinones, which then polymerize to melanin. Able to oxidize a wide variety of aromatic diphenol and diamino groups in the ortho, meta, and para positions but not monophenolic groups such as in phenol, tyramine, or tyrosine. Plays an important role in virulence. Plays a role in dissemination to extrapulmonary sites but is not involved in pulmonary growth or in elicitation of cellular immune responses in the lung. The polypeptide is Laccase-1 (LAC1) (Cryptococcus neoformans var. grubii serotype A (strain H99 / ATCC 208821 / CBS 10515 / FGSC 9487) (Filobasidiella neoformans var. grubii)).